Reading from the N-terminus, the 132-residue chain is MRAEGADHSMINLSVQQVLSLWAHGTVLRNLTEMWYWIFLWALFSSLFVHGAAGVLMFVMLQRHRQGRVLSIIAVSIGFLASVTGAMITSAAVAGIYRVAGKNMAPLEALVWGVGQTVLTLIISFSRILATL.

Residues 1–37 lie on the Extracellular side of the membrane; that stretch reads MRAEGADHSMINLSVQQVLSLWAHGTVLRNLTEMWYW. N-linked (GlcNAc...) asparagine glycosylation occurs at Asn12. The chain crosses the membrane as a helical span at residues 38 to 58; it reads IFLWALFSSLFVHGAAGVLMF. Over 59–68 the chain is Cytoplasmic; that stretch reads VMLQRHRQGR. Residues 69–89 traverse the membrane as a helical segment; sequence VLSIIAVSIGFLASVTGAMIT. At 90–104 the chain is on the extracellular side; the sequence is SAAVAGIYRVAGKNM. A helical transmembrane segment spans residues 105–125; the sequence is APLEALVWGVGQTVLTLIISF. Residues 126–132 lie on the Cytoplasmic side of the membrane; that stretch reads SRILATL.

It belongs to the TMEM170 family. Interacts with CTNNB1.

The protein resides in the cell membrane. In Rattus norvegicus (Rat), this protein is Transmembrane protein 170B (Tmem170b).